The sequence spans 343 residues: 3-dehydroquinate synthase (343 aa).

Residues 61–66 (SGEKYK), 95–99 (GVISD), 119–120 (TT), Lys-132, Lys-141, and 159–162 (FLKT) each bind NAD(+). Residues Glu-174, His-231, and His-248 each coordinate Zn(2+).

Belongs to the sugar phosphate cyclases superfamily. Dehydroquinate synthase family. Co(2+) is required as a cofactor. Zn(2+) serves as cofactor. The cofactor is NAD(+).

It is found in the cytoplasm. It carries out the reaction 7-phospho-2-dehydro-3-deoxy-D-arabino-heptonate = 3-dehydroquinate + phosphate. The protein operates within metabolic intermediate biosynthesis; chorismate biosynthesis; chorismate from D-erythrose 4-phosphate and phosphoenolpyruvate: step 2/7. In terms of biological role, catalyzes the conversion of 3-deoxy-D-arabino-heptulosonate 7-phosphate (DAHP) to dehydroquinate (DHQ). This chain is 3-dehydroquinate synthase, found in Helicobacter pylori (strain P12).